A 580-amino-acid chain; its full sequence is Frizzled-10-B (580 aa).

An N-terminal signal peptide occupies residues 1–20 (MEPRVVTALLLSLAAALCSG). Residues 21-224 (ISSINPDRSG…DVYWSKNDKK (204 aa)) lie on the Extracellular side of the membrane. Residues 29–150 (SGEGRCQAIE…NDPNYLCMEA (122 aa)) form the FZ domain. Cystine bridges form between cysteine 34/cysteine 95, cysteine 42/cysteine 88, cysteine 79/cysteine 117, cysteine 106/cysteine 147, and cysteine 110/cysteine 134. Asparagine 48 is a glycosylation site (N-linked (GlcNAc...) asparagine). An N-linked (GlcNAc...) asparagine glycan is attached at asparagine 153. A disordered region spans residues 173–194 (RPNSGHEMYPKDPKGRSSCENS). Residues 180-189 (MYPKDPKGRS) show a composition bias toward basic and acidic residues. The chain crosses the membrane as a helical span at residues 225-245 (FAFIWIAIWSLLCFFSSAFTV). At 246 to 261 (LTFLVDPLRFKYPERP) the chain is on the cytoplasmic side. The chain crosses the membrane as a helical span at residues 262 to 282 (IIFLSMCYCVYSVGYIIRLFA). Topologically, residues 283 to 309 (GADSIACDRDSGQLYVIQEGLESTGCT) are extracellular. Residues 310–330 (IVFLILYYFGMASSLWWVILT) form a helical membrane-spanning segment. Residues 331-350 (LTWFLAAGKKWGHEAIEANS) are Cytoplasmic-facing. Residues 351–371 (SYFHLAAWAIPAVKTIMILVM) form a helical membrane-spanning segment. Residues 372–392 (RRVAGDELTGVCYVGSMDVNA) lie on the Extracellular side of the membrane. The chain crosses the membrane as a helical span at residues 393–413 (LTGFVLIPLACYLIIGTSFIL). At 414-442 (SGFVALFHIRRVMKTGGENTDKLEKLMVR) the chain is on the cytoplasmic side. A helical transmembrane segment spans residues 443–463 (IGVFSVLYTVPATCVIACYFY). Residues 464-501 (ERLNMDFWKILATQDKCKMDSQTKTLDCTMTSSIPAVE) lie on the Extracellular side of the membrane. Residues 502–522 (IFMVKIFMLLVVGITSGMWIW) form a helical membrane-spanning segment. Residues 523-580 (TSKTVQSWQNVFSKSLKKRNRNKPASVITSAGIYKKPQQPPKIHHGKYESALRSPTCV) are Cytoplasmic-facing. The Lys-Thr-X-X-X-Trp motif, mediates interaction with the PDZ domain of Dvl family members motif lies at 525–530 (KTVQSW). Residues 558 to 580 (KPQQPPKIHHGKYESALRSPTCV) are disordered. The short motif at 578-580 (TCV) is the PDZ-binding element.

The protein belongs to the G-protein coupled receptor Fz/Smo family. In terms of tissue distribution, expressed in liver, lung, brain, testis, heart and ovary.

The protein resides in the cell membrane. Functionally, receptor for Wnt proteins. Most of frizzled receptors are coupled to the beta-catenin canonical signaling pathway, which leads to the activation of disheveled proteins, inhibition of GSK-3 kinase, nuclear accumulation of beta-catenin and activation of Wnt target genes. A second signaling pathway involving PKC and calcium fluxes has been seen for some family members, but it is not yet clear if it represents a distinct pathway or if it can be integrated in the canonical pathway, as PKC seems to be required for Wnt-mediated inactivation of GSK-3 kinase. Both pathways seem to involve interactions with G-proteins. May be involved in transduction and intercellular transmission of polarity information during tissue morphogenesis and/or in differentiated tissues. Activated by Wnt8. Could have an antagonizing activity in the morphogenesis during development. This Xenopus laevis (African clawed frog) protein is Frizzled-10-B (fzd10-b).